Reading from the N-terminus, the 1045-residue chain is Protein transport protein Sec16B (1045 aa).

The segment covering 1–13 (MEPWVPQWPPPSR) has biased composition (pro residues). Residues 1-78 (MEPWVPQWPP…PQHVPRLGAW (78 aa)) are disordered. The span at 22 to 33 (DSERGLQRDGYH) shows a compositional bias: basic and acidic residues. The segment covering 50-60 (QDVQGSPQPQQ) has biased composition (polar residues). Phosphoserine occurs at positions 55 and 137. Residues 149-168 (RHLSEHRPENQSRTFRRDSE) are compositionally biased toward basic and acidic residues. Disordered regions lie at residues 149 to 193 (RHLS…QERP), 707 to 733 (QQKA…TTES), 748 to 789 (APGC…YSVP), and 813 to 1045 (QTHS…TQPC). S186 bears the Phosphoserine mark. A central conserved domain (CCD); required for localization to endoplasmic reticulum exit sites region spans residues 267–711 (APKKFYIPHV…RHQELQQKAA (445 aa)). Over residues 773–784 (GPAAGPAGAPVP) the composition is skewed to low complexity. Phosphoserine occurs at positions 852, 858, 866, and 867. Residues 916 to 926 (EDSSDSPDSEQ) show a composition bias toward acidic residues. Pro residues predominate over residues 942–953 (SPPPLLESPPLP). A compositionally biased stretch (gly residues) spans 957–966 (AFGGGTGRGE). Positions 989 to 998 (ESASSELYSN) are enriched in polar residues.

Belongs to the SEC16 family. In terms of assembly, SEC16A and SEC16B are each present in multiple copies in a heteromeric complex. Interacts with TFG. Interacts with SEC13. As to expression, liver.

The protein localises to the endoplasmic reticulum membrane. It is found in the golgi apparatus membrane. In terms of biological role, plays a role in the organization of the endoplasmic reticulum exit sites (ERES), also known as transitional endoplasmic reticulum (tER). Required for secretory cargo traffic from the endoplasmic reticulum to the Golgi apparatus. Involved in peroxisome biogenesis. Regulates the transport of peroxisomal biogenesis factors PEX3 and PEX16 from the ER to peroxisomes. The sequence is that of Protein transport protein Sec16B (SEC16B) from Oryctolagus cuniculus (Rabbit).